Consider the following 175-residue polypeptide: Alpha-crystallin B chain (175 aa).

An N-acetylmethionine modification is found at Met-1. Phosphoserine is present on Ser-19. Residue Ser-41 is glycosylated (O-linked (GlcNAc) serine). Phosphoserine occurs at positions 45 and 59. Positions 56–164 constitute a sHSP domain; sequence RAPSWIDTGL…PERTIPITRE (109 aa). Residue His-83 coordinates Zn(2+). Lys-92 is modified (N6-acetyllysine). Zn(2+) contacts are provided by His-104, Glu-106, His-111, and His-119. A disordered region spans residues 142-175; it reads VLTVNGPRKQAPGPERTIPITREEKPAVTAAPKK. Lys-166 carries the N6-acetyllysine modification. O-linked (GlcNAc) threonine glycosylation is present at Thr-170.

Belongs to the small heat shock protein (HSP20) family. In terms of assembly, heteromer composed of three CRYAA and one CRYAB subunits. Aggregates with homologous proteins, including the small heat shock protein HSPB1, to form large heteromeric complexes. Inter-subunit bridging via zinc ions enhances stability, which is crucial as there is no protein turn over in the lens. Interacts with HSPBAP1 and TTN/titin. Interacts with TMEM109; in the cellular response to DNA damage. Interacts with DES; binds rapidly during early stages of DES filament assembly and a reduced binding seen in the later stages. Interacts with TMED10; the interaction mediates the translocation from the cytoplasm into the ERGIC (endoplasmic reticulum-Golgi intermediate compartment) and thereby secretion. Interacts with ATP6V1A and with MTOR, forming a ternary complex. As to expression, lens as well as other tissues.

The protein localises to the cytoplasm. The protein resides in the nucleus. It is found in the secreted. It localises to the lysosome. In terms of biological role, may contribute to the transparency and refractive index of the lens. Has chaperone-like activity, preventing aggregation of various proteins under a wide range of stress conditions. In lens epithelial cells, stabilizes the ATP6V1A protein, preventing its degradation by the proteasome. This Oryctolagus cuniculus (Rabbit) protein is Alpha-crystallin B chain (CRYAB).